Consider the following 333-residue polypeptide: Ketol-acid reductoisomerase (NADP(+)) (333 aa).

One can recognise a KARI N-terminal Rossmann domain in the interval 2–182 (AKIFYDSDCN…GASRAGIILT (181 aa)). Residues 25–28 (FGSQ), Ser-51, Ser-53, and 83–86 (DEKQ) contribute to the NADP(+) site. His-108 is an active-site residue. Gly-134 is a binding site for NADP(+). The region spanning 183–328 (TFKEETETDL…KELRKMMPWI (146 aa)) is the KARI C-terminal knotted domain. Asp-191, Glu-195, Glu-227, and Glu-231 together coordinate Mg(2+). Substrate is bound at residue Ser-252.

It belongs to the ketol-acid reductoisomerase family. It depends on Mg(2+) as a cofactor.

It catalyses the reaction (2R)-2,3-dihydroxy-3-methylbutanoate + NADP(+) = (2S)-2-acetolactate + NADPH + H(+). The catalysed reaction is (2R,3R)-2,3-dihydroxy-3-methylpentanoate + NADP(+) = (S)-2-ethyl-2-hydroxy-3-oxobutanoate + NADPH + H(+). It participates in amino-acid biosynthesis; L-isoleucine biosynthesis; L-isoleucine from 2-oxobutanoate: step 2/4. Its pathway is amino-acid biosynthesis; L-valine biosynthesis; L-valine from pyruvate: step 2/4. Its function is as follows. Involved in the biosynthesis of branched-chain amino acids (BCAA). Catalyzes an alkyl-migration followed by a ketol-acid reduction of (S)-2-acetolactate (S2AL) to yield (R)-2,3-dihydroxy-isovalerate. In the isomerase reaction, S2AL is rearranged via a Mg-dependent methyl migration to produce 3-hydroxy-3-methyl-2-ketobutyrate (HMKB). In the reductase reaction, this 2-ketoacid undergoes a metal-dependent reduction by NADPH to yield (R)-2,3-dihydroxy-isovalerate. The sequence is that of Ketol-acid reductoisomerase (NADP(+)) from Caldicellulosiruptor bescii (strain ATCC BAA-1888 / DSM 6725 / KCTC 15123 / Z-1320) (Anaerocellum thermophilum).